A 152-amino-acid polypeptide reads, in one-letter code: Neuromedin-S (152 aa).

Positions 1–26 are cleaved as a signal peptide; it reads MKHPFPQFPPILVIYCFCMLQIPSSG. 3 consecutive propeptides follow at residues 27-69, 70-105, and 106-108; these read ASPP…VYKR, FLFH…PSRR, and MKR. N144 bears the Asparagine amide mark. A propeptide spanning residues 147–152 is cleaved from the precursor; the sequence is YTDKVQ.

It belongs to the NmU family. As to expression, expressed in the CNS, spleen and testis. Specifically expressed in the suprachiasmatic nuclei (SCN) of the hypothalamus.

The protein resides in the secreted. In terms of biological role, implicated in the regulation of circadian rhythms through autocrine and/or paracrine actions. Stimulates the contraction of rectum and elevation of blood pressure. This chain is Neuromedin-S (Nms), found in Rattus norvegicus (Rat).